Here is a 315-residue protein sequence, read N- to C-terminus: Phosphatidylglycerol--prolipoprotein diacylglyceryl transferase (315 aa).

2 helical membrane-spanning segments follow: residues 19-39 (FTIH…VWIL) and 93-113 (VWEG…VAFL). Arginine 141 contacts a 1,2-diacyl-sn-glycero-3-phospho-(1'-sn-glycerol). Helical transmembrane passes span 188–208 (LFHP…ALII) and 256–276 (VWTA…LYQY).

The protein belongs to the Lgt family.

It localises to the cell membrane. The catalysed reaction is L-cysteinyl-[prolipoprotein] + a 1,2-diacyl-sn-glycero-3-phospho-(1'-sn-glycerol) = an S-1,2-diacyl-sn-glyceryl-L-cysteinyl-[prolipoprotein] + sn-glycerol 1-phosphate + H(+). It participates in protein modification; lipoprotein biosynthesis (diacylglyceryl transfer). Catalyzes the transfer of the diacylglyceryl group from phosphatidylglycerol to the sulfhydryl group of the N-terminal cysteine of a prolipoprotein, the first step in the formation of mature lipoproteins. The polypeptide is Phosphatidylglycerol--prolipoprotein diacylglyceryl transferase (Bifidobacterium longum (strain NCC 2705)).